The sequence spans 159 residues: Transcriptional repressor NrdR (159 aa).

Residues 1 to 21 (MRCPKCQHNKSNVIDSRQAED) form a disordered region. Residues 3-34 (CPKCQHNKSNVIDSRQAEDGNTIRRRRECDAC) fold into a zinc finger. Positions 49–139 (LLVVKKDGTR…VYRSFKDVDE (91 aa)) constitute an ATP-cone domain.

Belongs to the NrdR family. The cofactor is Zn(2+).

Its function is as follows. Negatively regulates transcription of bacterial ribonucleotide reductase nrd genes and operons by binding to NrdR-boxes. This chain is Transcriptional repressor NrdR, found in Streptococcus thermophilus (strain CNRZ 1066).